The sequence spans 364 residues: Mannonate dehydratase (364 aa).

The protein belongs to the mannonate dehydratase family. Fe(2+) serves as cofactor. Mn(2+) is required as a cofactor.

It catalyses the reaction D-mannonate = 2-dehydro-3-deoxy-D-gluconate + H2O. Its pathway is carbohydrate metabolism; pentose and glucuronate interconversion. Its function is as follows. Catalyzes the dehydration of D-mannonate. In Streptococcus equi subsp. zooepidemicus (strain MGCS10565), this protein is Mannonate dehydratase.